The following is a 184-amino-acid chain: Cobalamin adenosyltransferase (184 aa).

Residues 1–21 (MGNRLSKIATRTGDAGTTGLG) form a disordered region. ATP is bound by residues 10–13 (TRTG), 18–19 (TG), Lys28, 130–134 (RRAER), and Asn154.

Belongs to the Cob(I)alamin adenosyltransferase family. Homotrimer.

The catalysed reaction is 2 cob(II)alamin + AH2 + 2 ATP = 2 adenosylcob(III)alamin + 2 triphosphate + A + 2 H(+). Is potentially allosterically regulated by GTP/GDP, which enhances its affinity for AdoCbl by 5-fold. Binds cob(II)alamin weakly in the absence of ATP. The presence of ATP (but not GTP or GDP) increases the affinity of cob(II)alamin for the enzyme, and stoichiometric binding is observed. GTP blocks the transfer of cob(II)alamin to IcmF from ATR, thus averting its reconstitution with inactive cofactor. Its function is as follows. Adenosyltransferase that catalyzes the conversion of cob(II)alamin to adenosylcob(III)alamin (AdoCbl) in the presence of ATP and an electron donor. Acts as an accessory protein of IcmF that functions in cofactor repair, since IcmF is prone to inactivation during catalytic turnover due to the occasional loss of the 5'-deoxyadenosine moiety and formation of the inactive cob(II)alamin cofactor in its active site. Thus, receives and repairs the inactive cofactor, which is then reloaded onto IcmF in a GTPase-gated step. This is Cobalamin adenosyltransferase from Cupriavidus metallidurans (strain ATCC 43123 / DSM 2839 / NBRC 102507 / CH34) (Ralstonia metallidurans).